The following is a 308-amino-acid chain: Aspartate carbamoyltransferase catalytic subunit (308 aa).

The carbamoyl phosphate site is built by arginine 55 and threonine 56. Position 83 (lysine 83) interacts with L-aspartate. The carbamoyl phosphate site is built by arginine 105, histidine 133, and glutamine 136. L-aspartate-binding residues include arginine 166 and arginine 223. Positions 264 and 265 each coordinate carbamoyl phosphate.

This sequence belongs to the aspartate/ornithine carbamoyltransferase superfamily. ATCase family. As to quaternary structure, heterododecamer (2C3:3R2) of six catalytic PyrB chains organized as two trimers (C3), and six regulatory PyrI chains organized as three dimers (R2).

It catalyses the reaction carbamoyl phosphate + L-aspartate = N-carbamoyl-L-aspartate + phosphate + H(+). Its pathway is pyrimidine metabolism; UMP biosynthesis via de novo pathway; (S)-dihydroorotate from bicarbonate: step 2/3. Its function is as follows. Catalyzes the condensation of carbamoyl phosphate and aspartate to form carbamoyl aspartate and inorganic phosphate, the committed step in the de novo pyrimidine nucleotide biosynthesis pathway. The polypeptide is Aspartate carbamoyltransferase catalytic subunit (Salinispora arenicola (strain CNS-205)).